The following is a 415-amino-acid chain: 3-isopropylmalate dehydratase large subunit (415 aa).

[4Fe-4S] cluster-binding residues include C295, C353, and C356.

The protein belongs to the aconitase/IPM isomerase family. LeuC type 2 subfamily. In terms of assembly, heterodimer of LeuC and LeuD. The cofactor is [4Fe-4S] cluster.

It carries out the reaction (2R,3S)-3-isopropylmalate = (2S)-2-isopropylmalate. Its pathway is amino-acid biosynthesis; L-leucine biosynthesis; L-leucine from 3-methyl-2-oxobutanoate: step 2/4. Catalyzes the isomerization between 2-isopropylmalate and 3-isopropylmalate, via the formation of 2-isopropylmaleate. The polypeptide is 3-isopropylmalate dehydratase large subunit (Pyrobaculum aerophilum (strain ATCC 51768 / DSM 7523 / JCM 9630 / CIP 104966 / NBRC 100827 / IM2)).